Here is a 358-residue protein sequence, read N- to C-terminus: uncharacterized protein (358 aa).

An N-terminal signal peptide occupies residues Met-1–Ala-15. A lipid anchor (N-palmitoyl cysteine) is attached at Cys-16. Cys-16 carries the S-diacylglycerol cysteine lipid modification. The disordered stretch occupies residues Pro-331–Arg-358. Over residues Val-347–Arg-358 the composition is skewed to polar residues.

It is found in the cell membrane. This is an uncharacterized protein from Sinorhizobium fredii (strain NBRC 101917 / NGR234).